Consider the following 323-residue polypeptide: PI-PLC X domain-containing protein 1 (323 aa).

The 177-residue stretch at 30–206 folds into the PI-PLC X-box domain; that stretch reads RLWDVPLHHL…QVIVSYEDES (177 aa).

In terms of tissue distribution, widely expressed.

It localises to the cytoplasm. This is PI-PLC X domain-containing protein 1 (PLCXD1) from Homo sapiens (Human).